A 141-amino-acid chain; its full sequence is ATP synthase epsilon chain (141 aa).

Belongs to the ATPase epsilon chain family. In terms of assembly, F-type ATPases have 2 components, CF(1) - the catalytic core - and CF(0) - the membrane proton channel. CF(1) has five subunits: alpha(3), beta(3), gamma(1), delta(1), epsilon(1). CF(0) has three main subunits: a, b and c.

The protein localises to the cell inner membrane. In terms of biological role, produces ATP from ADP in the presence of a proton gradient across the membrane. The chain is ATP synthase epsilon chain from Thioalkalivibrio sulfidiphilus (strain HL-EbGR7).